Here is a 256-residue protein sequence, read N- to C-terminus: DNA repair protein RecO (256 aa).

It belongs to the RecO family.

In terms of biological role, involved in DNA repair and RecF pathway recombination. The chain is DNA repair protein RecO from Shouchella clausii (strain KSM-K16) (Alkalihalobacillus clausii).